The primary structure comprises 29 residues: Cytochrome b6-f complex subunit 8 (29 aa).

The chain crosses the membrane as a helical span at residues 3–23 (ILTLGWVGLLGLFTYSIAMVV).

The protein belongs to the PetN family. In terms of assembly, the 4 large subunits of the cytochrome b6-f complex are cytochrome b6, subunit IV (17 kDa polypeptide, PetD), cytochrome f and the Rieske protein, while the 4 small subunits are PetG, PetL, PetM and PetN. The complex functions as a dimer.

The protein resides in the cellular thylakoid membrane. Component of the cytochrome b6-f complex, which mediates electron transfer between photosystem II (PSII) and photosystem I (PSI), cyclic electron flow around PSI, and state transitions. The polypeptide is Cytochrome b6-f complex subunit 8 (Cyanothece sp. (strain PCC 7425 / ATCC 29141)).